Reading from the N-terminus, the 349-residue chain is Aspartate carbamoyltransferase catalytic subunit (349 aa).

Residues Arg59 and Thr60 each coordinate carbamoyl phosphate. Lys87 contributes to the L-aspartate binding site. Residues Arg109, His142, and Gln145 each coordinate carbamoyl phosphate. The L-aspartate site is built by Arg182 and Arg253. Carbamoyl phosphate is bound by residues Gly294 and Pro295.

It belongs to the aspartate/ornithine carbamoyltransferase superfamily. ATCase family. As to quaternary structure, heterododecamer (2C3:3R2) of six catalytic PyrB chains organized as two trimers (C3), and six regulatory PyrI chains organized as three dimers (R2).

It catalyses the reaction carbamoyl phosphate + L-aspartate = N-carbamoyl-L-aspartate + phosphate + H(+). It functions in the pathway pyrimidine metabolism; UMP biosynthesis via de novo pathway; (S)-dihydroorotate from bicarbonate: step 2/3. Its function is as follows. Catalyzes the condensation of carbamoyl phosphate and aspartate to form carbamoyl aspartate and inorganic phosphate, the committed step in the de novo pyrimidine nucleotide biosynthesis pathway. In Synechococcus sp. (strain CC9902), this protein is Aspartate carbamoyltransferase catalytic subunit.